A 510-amino-acid polypeptide reads, in one-letter code: Cytochrome P450 93A3 (510 aa).

Residues Pro64–Ala84 form a helical membrane-spanning segment. Residue Cys448 coordinates heme.

It belongs to the cytochrome P450 family. Requires heme as cofactor.

Its subcellular location is the membrane. The polypeptide is Cytochrome P450 93A3 (CYP93A3) (Glycine max (Soybean)).